The primary structure comprises 366 residues: Dual-specificity RNA methyltransferase RlmN (366 aa).

Glutamate 91 (proton acceptor) is an active-site residue. In terms of domain architecture, Radical SAM core spans 97–333 (EDDRGTLCVS…TTVRKTRGED (237 aa)). A disulfide bridge connects residues cysteine 104 and cysteine 338. [4Fe-4S] cluster-binding residues include cysteine 111, cysteine 115, and cysteine 118. Residues 164-165 (GE), serine 196, 218-220 (SLH), and asparagine 295 contribute to the S-adenosyl-L-methionine site. The active-site S-methylcysteine intermediate is cysteine 338.

Belongs to the radical SAM superfamily. RlmN family. [4Fe-4S] cluster is required as a cofactor.

The protein resides in the cytoplasm. It carries out the reaction adenosine(2503) in 23S rRNA + 2 reduced [2Fe-2S]-[ferredoxin] + 2 S-adenosyl-L-methionine = 2-methyladenosine(2503) in 23S rRNA + 5'-deoxyadenosine + L-methionine + 2 oxidized [2Fe-2S]-[ferredoxin] + S-adenosyl-L-homocysteine. The enzyme catalyses adenosine(37) in tRNA + 2 reduced [2Fe-2S]-[ferredoxin] + 2 S-adenosyl-L-methionine = 2-methyladenosine(37) in tRNA + 5'-deoxyadenosine + L-methionine + 2 oxidized [2Fe-2S]-[ferredoxin] + S-adenosyl-L-homocysteine. Specifically methylates position 2 of adenine 2503 in 23S rRNA and position 2 of adenine 37 in tRNAs. m2A2503 modification seems to play a crucial role in the proofreading step occurring at the peptidyl transferase center and thus would serve to optimize ribosomal fidelity. This chain is Dual-specificity RNA methyltransferase RlmN, found in Laribacter hongkongensis (strain HLHK9).